Reading from the N-terminus, the 418-residue chain is Putative competence-damage inducible protein (418 aa).

The protein belongs to the CinA family.

The protein is Putative competence-damage inducible protein of Streptococcus gordonii (strain Challis / ATCC 35105 / BCRC 15272 / CH1 / DL1 / V288).